A 471-amino-acid polypeptide reads, in one-letter code: Glutamate--tRNA ligase (471 aa).

Positions 9-19 (PSPTGYLHVGG) match the 'HIGH' region motif. Residues cysteine 98, cysteine 100, cysteine 125, and aspartate 127 each contribute to the Zn(2+) site. The short motif at 237-241 (KLSKR) is the 'KMSKS' region element. Residue lysine 240 coordinates ATP.

This sequence belongs to the class-I aminoacyl-tRNA synthetase family. Glutamate--tRNA ligase type 1 subfamily. As to quaternary structure, monomer. Zn(2+) serves as cofactor.

The protein localises to the cytoplasm. The catalysed reaction is tRNA(Glu) + L-glutamate + ATP = L-glutamyl-tRNA(Glu) + AMP + diphosphate. Functionally, catalyzes the attachment of glutamate to tRNA(Glu) in a two-step reaction: glutamate is first activated by ATP to form Glu-AMP and then transferred to the acceptor end of tRNA(Glu). This is Glutamate--tRNA ligase from Yersinia pseudotuberculosis serotype IB (strain PB1/+).